A 472-amino-acid chain; its full sequence is Carboxypeptidase Q (472 aa).

The first 20 residues, 1–20, serve as a signal peptide directing secretion; the sequence is MRFLFFLFVAVVHLFSLGSG. A propeptide spanning residues 21-44 is cleaved from the precursor; that stretch reads KAIYKSGVSQRTFQEIKEEIANYE. Asn61 is a glycosylation site (N-linked (GlcNAc...) asparagine). The Zn(2+) site is built by His290 and Asp302. The active-site Nucleophile is the Glu336. Glu337 contacts Zn(2+). Asn353 is a glycosylation site (N-linked (GlcNAc...) asparagine). Asp364 serves as a coordination point for Zn(2+). Asn396 is a glycosylation site (N-linked (GlcNAc...) asparagine). Zn(2+) is bound at residue His434.

The protein belongs to the peptidase M28 family. Homodimer. The monomeric form is inactive while the homodimer is active. Post-translationally, N-glycosylated. The secreted form is modified by hybrid or complex type oligosaccharide chains.

The protein resides in the endoplasmic reticulum. It localises to the golgi apparatus. It is found in the lysosome. The protein localises to the secreted. Carboxypeptidase that may play an important role in the hydrolysis of circulating peptides. Catalyzes the hydrolysis of dipeptides with unsubstituted terminals into amino acids. May play a role in the liberation of thyroxine hormone from its thyroglobulin (Tg) precursor. In Rattus norvegicus (Rat), this protein is Carboxypeptidase Q (Cpq).